We begin with the raw amino-acid sequence, 86 residues long: Tryptophan-containing weak neurotoxin (86 aa).

An N-terminal signal peptide occupies residues methionine 1–threonine 21. 5 disulfide bridges follow: cysteine 24–cysteine 45, cysteine 27–cysteine 32, cysteine 38–cysteine 63, cysteine 67–cysteine 78, and cysteine 79–cysteine 84.

Belongs to the three-finger toxin family. Ancestral subfamily. Orphan group II sub-subfamily. Monomer in solution. In terms of processing, the disulfide bond Cys-27-Cys-32 is probably not needed for efficient interaction of the toxin with the target receptor (Torpedo muscle or alpha-7/CHRNA7 nAChR). As to expression, expressed by the venom gland.

The protein localises to the secreted. Its function is as follows. Neurotoxin that irreversibly inhibits nicotinic acetylcholine receptors (nAChR) and allosterically interacts with muscarinic acetylcholine receptors (mAChR). The loop II is involved in the interaction of this toxin with nAChR and mAChR. On nAChR, it acts as a competitive antagonist (muscle-type and alpha-7/CHRNA7) with IC(50) values in the micromolar range. On mAChR, in presence of ACh, it partially inhibits the effect of acetylcholine (ACh) (allosteric antagonist), whereas in the absence of ACh, it activates the receptor (allosteric agonist). It also shows a very weak inhibition of GABA(A) receptor composed of alpha-1-beta-3-gamma-2 (GABRA1 and GABRB3 and GABRG2) subunits (10 uM inhibit 31% current). In vivo, is nonlethal to mice at concentrations up to 20 mg/kg, but exerts a myorelaxant effect, induces a dose-dependent decrease in blood pressure and an increase in heart rate in mice and rats. This Naja kaouthia (Monocled cobra) protein is Tryptophan-containing weak neurotoxin.